A 290-amino-acid polypeptide reads, in one-letter code: MGKDDVIESGAGGGEFAAKDYTDPPPAPLIDAAELGSWSLYRAVIAEFIATLLFLYITVATVIGYKHQTDASASGADAACGGVGVLGIAWAFGGMIFVLVYCTAGISGGHINPAVTFGLFLARKVSLVRALLYIVAQCLGAICGVGLVKAFQSAYFDRYGGGANSLASGYSRGTGLGAEIIGTFVLVYTVFSATDPKRNARDSHVPVLAPLPIGFAVFMVHLATIPVTGTGINPARSLGAAVIYNKDKPWDDHWIFWVGPLVGAAIAAFYHQYILRAGAIKALGSFRSNA.

Residues 1 to 20 are disordered; it reads MGKDDVIESGAGGGEFAAKD. The next 2 helical transmembrane spans lie at 43–63 and 80–100; these read AVIA…ATVI and CGGV…FVLV. An NPA 1 motif is present at residues 112 to 114; it reads NPA. The next 3 membrane-spanning stretches (helical) occupy residues 131 to 151, 173 to 193, and 205 to 225; these read LLYI…VKAF, GTGL…VFSA, and VPVL…LATI. Residues 233-235 carry the NPA 2 motif; that stretch reads NPA. The helical transmembrane segment at 255–275 threads the bilayer; the sequence is IFWVGPLVGAAIAAFYHQYIL.

It belongs to the MIP/aquaporin (TC 1.A.8) family. PIP (TC 1.A.8.11) subfamily. In terms of assembly, homomers. Can interact with PIP1-2 to form heteromers. Expressed in roots.

It is found in the cell membrane. Water channel required to facilitate the transport of water across cell membrane. Active as homomers. Increased activity when heteromerization with PIP1-2. The protein is Aquaporin PIP2-1 (PIP2-1) of Zea mays (Maize).